Here is a 107-residue protein sequence, read N- to C-terminus: UPF0213 protein SG0387 (107 aa).

Positions 4–79 (SLWHLYLIRT…KQLSRAQKEH (76 aa)) constitute a GIY-YIG domain.

The protein belongs to the UPF0213 family.

The sequence is that of UPF0213 protein SG0387 from Sodalis glossinidius (strain morsitans).